A 291-amino-acid chain; its full sequence is S-methyl-5'-thioadenosine phosphorylase (291 aa).

Phosphate is bound by residues Ser12, 54-55, and 87-88; these read RH and SA. Met185 is a substrate binding site. Phosphate is bound at residue Thr186. 209–211 contacts substrate; that stretch reads DFD.

The protein belongs to the PNP/MTAP phosphorylase family. MTAP subfamily. In terms of assembly, homohexamer. Dimer of a homotrimer.

The catalysed reaction is S-methyl-5'-thioadenosine + phosphate = 5-(methylsulfanyl)-alpha-D-ribose 1-phosphate + adenine. It participates in amino-acid biosynthesis; L-methionine biosynthesis via salvage pathway; S-methyl-5-thio-alpha-D-ribose 1-phosphate from S-methyl-5'-thioadenosine (phosphorylase route): step 1/1. Catalyzes the reversible phosphorylation of S-methyl-5'-thioadenosine (MTA) to adenine and 5-methylthioribose-1-phosphate. Involved in the breakdown of MTA, a major by-product of polyamine biosynthesis. Responsible for the first step in the methionine salvage pathway after MTA has been generated from S-adenosylmethionine. Has broad substrate specificity with 6-aminopurine nucleosides as preferred substrates. This is S-methyl-5'-thioadenosine phosphorylase from Bradyrhizobium diazoefficiens (strain JCM 10833 / BCRC 13528 / IAM 13628 / NBRC 14792 / USDA 110).